We begin with the raw amino-acid sequence, 696 residues long: Tegument protein UL47 (696 aa).

2 stretches are compositionally biased toward basic residues: residues 1–15 (MSVRGHAVRRRRAST) and 70–81 (RRRREARGHPGS). Disordered regions lie at residues 1 to 39 (MSVRGHAVRRRRASTRSHAPSAHRADSPVEDEPEGGGVG) and 54 to 130 (SEVE…YLGP). An RNA-binding region spans residues 57-84 (EAAGEMASEEPPPRRRREARGHPGSRRA). The Nuclear localization signal signature appears at 70–84 (RRRREARGHPGSRRA). Residues 87–103 (ARAAAPPRRASFPRPRS) show a composition bias toward low complexity. The short motif at 650 to 673 (SVLGPRVRVVDIMAQFRKLLMGDE) is the Nuclear export signal element.

This sequence belongs to the alphaherpesvirinae HHV-1 UL47 family. In terms of assembly, interacts with US3 kinase. Interacts with UL31 and UL34; these interactions seem important for efficient virion nuclear egress. Interacts with UL41/VHS. Phosphorylated by US3. This phosphorylation is required for proper nuclear localization.

It is found in the virion tegument. The protein resides in the host nucleus. Its subcellular location is the host cytoplasm. Functionally, tegument protein that can bind to various RNA transcripts. Plays a role in the attenuation of selective viral and cellular mRNA degradation by modulating the activity of host shutoff RNase UL41/VHS. Also plays a role in the primary envelopment of virions in the perinuclear space, probably by interacting with two nuclear egress proteins UL31 and UL34. This Human herpesvirus 2 (strain HG52) (HHV-2) protein is Tegument protein UL47.